The chain runs to 473 residues: Ribulose bisphosphate carboxylase large chain (473 aa).

2 residues coordinate substrate: Asn-116 and Thr-166. Lys-168 serves as the catalytic Proton acceptor. Substrate is bound at residue Lys-170. The Mg(2+) site is built by Lys-194, Asp-196, and Glu-197. At Lys-194 the chain carries N6-carboxylysine. His-287 functions as the Proton acceptor in the catalytic mechanism. Positions 288, 320, and 372 each coordinate substrate.

The protein belongs to the RuBisCO large chain family. Type I subfamily. In terms of assembly, heterohexadecamer of 8 large chains and 8 small chains. Mg(2+) is required as a cofactor.

The catalysed reaction is 2 (2R)-3-phosphoglycerate + 2 H(+) = D-ribulose 1,5-bisphosphate + CO2 + H2O. The enzyme catalyses D-ribulose 1,5-bisphosphate + O2 = 2-phosphoglycolate + (2R)-3-phosphoglycerate + 2 H(+). RuBisCO catalyzes two reactions: the carboxylation of D-ribulose 1,5-bisphosphate, the primary event in carbon dioxide fixation, as well as the oxidative fragmentation of the pentose substrate. Both reactions occur simultaneously and in competition at the same active site. This chain is Ribulose bisphosphate carboxylase large chain, found in Nitrosomonas europaea (strain ATCC 19718 / CIP 103999 / KCTC 2705 / NBRC 14298).